The following is a 515-amino-acid chain: Germ cell-less protein-like 1 (515 aa).

The tract at residues 1 to 35 (MGSLSSRVLRQPRPALAQQAQGARAGGSARRPDTG) is disordered. The segment covering 11–29 (QPRPALAQQAQGARAGGSA) has biased composition (low complexity). The Nuclear localization signal motif lies at 49–55 (SHKRKRS). The tract at residues 65-85 (DSETDEDEEEGDEQQRLLNTP) is disordered. The residue at position 66 (S66) is a Phosphoserine. The segment covering 67-76 (ETDEDEEEGD) has biased composition (acidic residues). T68 carries the phosphothreonine modification. The Nuclear localization signal motif lies at 85–91 (PRRKKLK). The BTB domain maps to 108–178 (SDIKICALGE…LYRDDVLIKP (71 aa)).

Interacts with TMPO-beta, TSG101 and TFDP2. Interacts with EMD.

It localises to the nucleus matrix. Possible function in spermatogenesis. Enhances the degradation of MDM2 and increases the amount of p53 probably by modulating the nucleocytoplasmic transport. This Homo sapiens (Human) protein is Germ cell-less protein-like 1 (GMCL1).